Consider the following 130-residue polypeptide: Ribosome-binding factor A (130 aa).

This sequence belongs to the RbfA family. Monomer. Binds 30S ribosomal subunits, but not 50S ribosomal subunits or 70S ribosomes.

The protein localises to the cytoplasm. Functionally, one of several proteins that assist in the late maturation steps of the functional core of the 30S ribosomal subunit. Associates with free 30S ribosomal subunits (but not with 30S subunits that are part of 70S ribosomes or polysomes). Required for efficient processing of 16S rRNA. May interact with the 5'-terminal helix region of 16S rRNA. The polypeptide is Ribosome-binding factor A (Roseiflexus sp. (strain RS-1)).